The following is a 304-amino-acid chain: Acetaldehyde dehydrogenase 1 (304 aa).

11-14 (SGNI) is a binding site for NAD(+). The active-site Acyl-thioester intermediate is the C130. Residues 161–169 (SVGPGTRAN) and N272 each bind NAD(+).

It belongs to the acetaldehyde dehydrogenase family.

It carries out the reaction acetaldehyde + NAD(+) + CoA = acetyl-CoA + NADH + H(+). The chain is Acetaldehyde dehydrogenase 1 (lapF) from Azoarcus sp. (strain BH72).